The primary structure comprises 852 residues: Envelope glycoprotein gp160 (852 aa).

Positions 1–32 (MRVKGIKKNYQHLWRWGGMMLLGILMICSATD) are cleaved as a signal peptide. Over 33 to 680 (KLWVTVYYGV…ITNWLWYIKI (648 aa)) the chain is Extracellular. N-linked (GlcNAc...) asparagine; by host glycosylation occurs at asparagine 49. A disulfide bridge connects residues cysteine 54 and cysteine 74. N-linked (GlcNAc...) asparagine; by host glycans are attached at residues asparagine 88, asparagine 135, asparagine 138, asparagine 154, asparagine 158, asparagine 197, asparagine 234, asparagine 241, asparagine 262, asparagine 276, asparagine 289, asparagine 295, asparagine 301, asparagine 331, asparagine 354, and asparagine 360. 5 disulfides stabilise this stretch: cysteine 119/cysteine 205, cysteine 126/cysteine 196, cysteine 131/cysteine 155, cysteine 218/cysteine 247, and cysteine 228/cysteine 239. The tract at residues 131–154 (CHDFNATNATSNSGKMMEGGEMKN) is V1. Residues 155–196 (CSFNITTSIRDKMQKEYALFYKLDIVPIDNDKTNTRYRLISC) are V2. Positions 296 to 329 (CTRPNNNTRKRITMGPGRVYYTTGQIIGDIRRAH) are V3. Cysteine 296 and cysteine 330 form a disulfide bridge. A CD4-binding loop region spans residues 362-372 (SSGGDPEIVMH). 2 cysteine pairs are disulfide-bonded: cysteine 376/cysteine 439 and cysteine 383/cysteine 412. The tract at residues 383-412 (CNTTQLFNSTWYRNTTGNITEGNSPITLPC) is V4. N-linked (GlcNAc...) asparagine; by host glycosylation is found at asparagine 384, asparagine 390, asparagine 396, asparagine 400, asparagine 442, and asparagine 456. V5 regions lie at residues 454 to 467 (NNNE…FRPG) and 457 to 467 (ETTDTEIFRPG). Residues 508–528 (AVGLGALFLGFLGAAGSTMGA) form a fusion peptide region. Residues 570–588 (KQLQARVLAVERYLKDQQL) are immunosuppression. Residues cysteine 594 and cysteine 600 are joined by a disulfide bond. Asparagine 607, asparagine 612, asparagine 621, asparagine 633, and asparagine 670 each carry an N-linked (GlcNAc...) asparagine; by host glycan. The stretch at 629–663 (REIDNYTNLIYSLIEDSQIQQEKNEKELLELDKWA) forms a coiled coil. Residues 658-679 (ELDKWASLWNWFNITNWLWYIK) are MPER; binding to GalCer. A helical membrane pass occupies residues 681 to 701 (FIMIVGGLIGLRIVFAVLSIV). At 702-852 (NRVRQGYSPL…IRQGLERALQ (151 aa)) the chain is on the cytoplasmic side. Residues 708–711 (YSPL) carry the YXXL motif; contains endocytosis signal motif. The disordered stretch occupies residues 715-741 (TRLPGRRGPDRPEGIEEEGGERDRDRS).

This sequence belongs to the HIV-1 env protein family. As to quaternary structure, the mature envelope protein (Env) consists of a homotrimer of non-covalently associated gp120-gp41 heterodimers. The resulting complex protrudes from the virus surface as a spike. There seems to be as few as 10 spikes on the average virion. Interacts with host CD4, CCR5 and CXCR4. Gp120 also interacts with the C-type lectins CD209/DC-SIGN and CLEC4M/DC-SIGNR (collectively referred to as DC-SIGN(R)). Gp120 and gp41 interact with GalCer. Gp120 interacts with host ITGA4/ITGB7 complex; on CD4+ T-cells, this interaction results in rapid activation of integrin ITGAL/LFA-1, which facilitates efficient cell-to-cell spreading of HIV-1. Gp120 interacts with cell-associated heparan sulfate; this interaction increases virus infectivity on permissive cells and may be involved in infection of CD4- cells. The mature envelope protein (Env) consists of a homotrimer of non-covalently associated gp120-gp41 heterodimers. The resulting complex protrudes from the virus surface as a spike. There seems to be as few as 10 spikes on the average virion. In terms of processing, highly glycosylated by host. The high number of glycan on the protein is reffered to as 'glycan shield' because it contributes to hide protein sequence from adaptive immune system. Palmitoylation of the transmembrane protein and of Env polyprotein (prior to its proteolytic cleavage) is essential for their association with host cell membrane lipid rafts. Palmitoylation is therefore required for envelope trafficking to classical lipid rafts, but not for viral replication. Post-translationally, specific enzymatic cleavages in vivo yield mature proteins. Envelope glycoproteins are synthesized as an inactive precursor that is heavily N-glycosylated and processed likely by host cell furin in the Golgi to yield the mature SU and TM proteins. The cleavage site between SU and TM requires the minimal sequence [KR]-X-[KR]-R. About 2 of the 9 disulfide bonds of gp41 are reduced by P4HB/PDI, following binding to CD4 receptor.

It is found in the virion membrane. It localises to the host cell membrane. The protein resides in the host endosome membrane. Oligomerizes in the host endoplasmic reticulum into predominantly trimers. In a second time, gp160 transits in the host Golgi, where glycosylation is completed. The precursor is then proteolytically cleaved in the trans-Golgi and thereby activated by cellular furin or furin-like proteases to produce gp120 and gp41. Functionally, attaches the virus to the host lymphoid cell by binding to the primary receptor CD4. This interaction induces a structural rearrangement creating a high affinity binding site for a chemokine coreceptor like CXCR4 and/or CCR5. Acts as a ligand for CD209/DC-SIGN and CLEC4M/DC-SIGNR, which are respectively found on dendritic cells (DCs), and on endothelial cells of liver sinusoids and lymph node sinuses. These interactions allow capture of viral particles at mucosal surfaces by these cells and subsequent transmission to permissive cells. HIV subverts the migration properties of dendritic cells to gain access to CD4+ T-cells in lymph nodes. Virus transmission to permissive T-cells occurs either in trans (without DCs infection, through viral capture and transmission), or in cis (following DCs productive infection, through the usual CD4-gp120 interaction), thereby inducing a robust infection. In trans infection, bound virions remain infectious over days and it is proposed that they are not degraded, but protected in non-lysosomal acidic organelles within the DCs close to the cell membrane thus contributing to the viral infectious potential during DCs' migration from the periphery to the lymphoid tissues. On arrival at lymphoid tissues, intact virions recycle back to DCs' cell surface allowing virus transmission to CD4+ T-cells. In terms of biological role, acts as a class I viral fusion protein. Under the current model, the protein has at least 3 conformational states: pre-fusion native state, pre-hairpin intermediate state, and post-fusion hairpin state. During fusion of viral and target intracellular membranes, the coiled coil regions (heptad repeats) assume a trimer-of-hairpins structure, positioning the fusion peptide in close proximity to the C-terminal region of the ectodomain. The formation of this structure appears to drive apposition and subsequent fusion of viral and target cell membranes. Complete fusion occurs in host cell endosomes and is dynamin-dependent, however some lipid transfer might occur at the plasma membrane. The virus undergoes clathrin-dependent internalization long before endosomal fusion, thus minimizing the surface exposure of conserved viral epitopes during fusion and reducing the efficacy of inhibitors targeting these epitopes. Membranes fusion leads to delivery of the nucleocapsid into the cytoplasm. In Human immunodeficiency virus type 1 group M subtype B (isolate BRVA) (HIV-1), this protein is Envelope glycoprotein gp160.